The sequence spans 512 residues: ATP synthase subunit alpha (512 aa).

169-176 (GDRQTGKT) contacts ATP.

This sequence belongs to the ATPase alpha/beta chains family. As to quaternary structure, F-type ATPases have 2 components, CF(1) - the catalytic core - and CF(0) - the membrane proton channel. CF(1) has five subunits: alpha(3), beta(3), gamma(1), delta(1), epsilon(1). CF(0) has four main subunits: a(1), b(1), b'(1) and c(9-12).

The protein localises to the cell inner membrane. The enzyme catalyses ATP + H2O + 4 H(+)(in) = ADP + phosphate + 5 H(+)(out). Its function is as follows. Produces ATP from ADP in the presence of a proton gradient across the membrane. The alpha chain is a regulatory subunit. The sequence is that of ATP synthase subunit alpha from Roseobacter denitrificans (strain ATCC 33942 / OCh 114) (Erythrobacter sp. (strain OCh 114)).